Consider the following 417-residue polypeptide: DNA primase DnaG (417 aa).

The region spanning 171–257 (DAIIIVEGRA…SVEDMARKEI (87 aa)) is the Toprim domain. Positions 177, 219, and 221 each coordinate Mg(2+). The interval 278-325 (VPGEKRTQDLRPQKPGASEQNSIKKENVENENESTPTSFEPISEPAPP) is disordered. A compositionally biased stretch (basic and acidic residues) spans 279 to 289 (PGEKRTQDLRP).

It belongs to the archaeal DnaG primase family. Forms a ternary complex with MCM helicase and DNA. Mg(2+) serves as cofactor.

It catalyses the reaction ssDNA + n NTP = ssDNA/pppN(pN)n-1 hybrid + (n-1) diphosphate.. Its function is as follows. RNA polymerase that catalyzes the synthesis of short RNA molecules used as primers for DNA polymerase during DNA replication. The chain is DNA primase DnaG from Methanosphaerula palustris (strain ATCC BAA-1556 / DSM 19958 / E1-9c).